A 375-amino-acid polypeptide reads, in one-letter code: MKIIADENMPYVDVLFGELGEIEYVNGRTLAPEQLADADVLLVRSVTQVNEALLCQNQQLKFVGSATIGTDHVDTAYLKSRGIPFTNAPGCNATAVGEYAFIAMLELAQRYRQPLKDKKVAVIGAGNTGTATARCLEAYGVEHRLCDPVLAAQGDNRQFYELDELIAWADVISLHVPITKGGDHPTWYLFDQQRLEALKTGAWLLNCCRGEVIDNRALIEVKQRRVDIKLVLDVWEGEPSPMLALVPLVDIATPHIAGYSLEGKARGTFMLYEALCRVMGKTGENSFHSLLPPFFLGSMQVRELGDERALLTLCRTVYDLRDDDIHFRQSGTDRLGFDKMRKNHRHRREFSALKLENAKGSEVNWLSFLGFSNVG.

Substrate contacts are provided by Ser45 and Thr67. Asp147 contributes to the NAD(+) binding site. Residue Arg209 is part of the active site. Asp233 is an NAD(+) binding site. Glu238 is a catalytic residue. The active-site Proton donor is the His255. NAD(+) is bound at residue Gly258. Tyr259 lines the substrate pocket.

The protein belongs to the D-isomer specific 2-hydroxyacid dehydrogenase family. PdxB subfamily. As to quaternary structure, homodimer.

It is found in the cytoplasm. The enzyme catalyses 4-phospho-D-erythronate + NAD(+) = (R)-3-hydroxy-2-oxo-4-phosphooxybutanoate + NADH + H(+). The protein operates within cofactor biosynthesis; pyridoxine 5'-phosphate biosynthesis; pyridoxine 5'-phosphate from D-erythrose 4-phosphate: step 2/5. Catalyzes the oxidation of erythronate-4-phosphate to 3-hydroxy-2-oxo-4-phosphonooxybutanoate. This Shewanella amazonensis (strain ATCC BAA-1098 / SB2B) protein is Erythronate-4-phosphate dehydrogenase.